The chain runs to 615 residues: RUN domain-containing protein 1 (615 aa).

The disordered stretch occupies residues 15–41 (TAVGPKAKDEEEEEEEEESLPPCETVR). Over residues 24–33 (EEEEEEEEES) the composition is skewed to acidic residues. A Phosphoserine modification is found at Ser-73. 2 coiled-coil regions span residues 76–102 (DATV…LSSH) and 163–238 (RVRG…NLNE). Residues 147–180 (DPCGGDESDVLPGDRPRVRGEDQSEQEKRERLET) form a disordered region. Basic and acidic residues predominate over residues 158-180 (PGDRPRVRGEDQSEQEKRERLET). The RUN domain occupies 423–604 (ELTTVVRKEL…LKFSLPVDLA (182 aa)). A Phosphoserine modification is found at Ser-499.

In terms of biological role, may play a role as p53/TP53 inhibitor and thus may have oncogenic activity. The sequence is that of RUN domain-containing protein 1 (Rundc1) from Mus musculus (Mouse).